The following is a 363-amino-acid chain: UDP-N-acetylglucosamine--N-acetylmuramyl-(pentapeptide) pyrophosphoryl-undecaprenol N-acetylglucosamine transferase (363 aa).

Residues 10-12 (TGG), asparagine 124, serine 195, isoleucine 250, and glutamine 295 contribute to the UDP-N-acetyl-alpha-D-glucosamine site.

This sequence belongs to the glycosyltransferase 28 family. MurG subfamily.

It localises to the cell membrane. The catalysed reaction is di-trans,octa-cis-undecaprenyl diphospho-N-acetyl-alpha-D-muramoyl-L-alanyl-D-glutamyl-meso-2,6-diaminopimeloyl-D-alanyl-D-alanine + UDP-N-acetyl-alpha-D-glucosamine = di-trans,octa-cis-undecaprenyl diphospho-[N-acetyl-alpha-D-glucosaminyl-(1-&gt;4)]-N-acetyl-alpha-D-muramoyl-L-alanyl-D-glutamyl-meso-2,6-diaminopimeloyl-D-alanyl-D-alanine + UDP + H(+). It participates in cell wall biogenesis; peptidoglycan biosynthesis. Cell wall formation. Catalyzes the transfer of a GlcNAc subunit on undecaprenyl-pyrophosphoryl-MurNAc-pentapeptide (lipid intermediate I) to form undecaprenyl-pyrophosphoryl-MurNAc-(pentapeptide)GlcNAc (lipid intermediate II). This Listeria welshimeri serovar 6b (strain ATCC 35897 / DSM 20650 / CCUG 15529 / CIP 8149 / NCTC 11857 / SLCC 5334 / V8) protein is UDP-N-acetylglucosamine--N-acetylmuramyl-(pentapeptide) pyrophosphoryl-undecaprenol N-acetylglucosamine transferase.